The chain runs to 677 residues: WD and tetratricopeptide repeats protein 1 (677 aa).

WD repeat units follow at residues 45-84, 88-129, 132-172, 182-222, and 265-305; these read GHSG…KLLS, GHTA…TIHM, DHTN…KHSE, GQLV…NHRK, and RLRV…RPYT. Ser-353 carries the phosphoserine modification. TPR repeat units follow at residues 362–395 and 397–432; these read LERV…APHN and MLYG…NPCH. Residues 487–509 form a disordered region; that stretch reads NDGEEKKGPGGGAPVRLRSTSRK. Residue Ser-511 is modified to Phosphoserine. 2 WD repeats span residues 535–575 and 578–617; these read NTTT…LVRV and GDES…EDLT. The interval 655–677 is disordered; it reads SSGGAGASDDEDSSEGQVQCRPS.

It participates in protein modification; protein ubiquitination. Its function is as follows. May function as a substrate receptor for CUL4-DDB1 E3 ubiquitin-protein ligase complex. This Homo sapiens (Human) protein is WD and tetratricopeptide repeats protein 1 (WDTC1).